A 444-amino-acid polypeptide reads, in one-letter code: Ras-related protein RabX (444 aa).

Residue 29-36 coordinates GTP; sequence GGDVCSKN. The short motif at 51–58 is the Effector region element; that stretch reads LIQVFDDY. Position 73–77 (73–77) interacts with GTP; the sequence is EFSSI. The disordered stretch occupies residues 91–136; sequence ENNKNKNNNNNYNYNNNNYNNNNNNNNNNNNNNNNNNNNNNNNNNS. A compositionally biased stretch (low complexity) spans 95–135; that stretch reads NKNNNNNYNYNNNNYNNNNNNNNNNNNNNNNNNNNNNNNNN. 207–210 is a GTP binding site; the sequence is NDSN. Disordered stretches follow at residues 213-232 and 298-401; these read TPNFSDSSSSSSSSSSSNII and LQGD…NNDL. Low complexity-rich tracts occupy residues 217-232 and 303-399; these read SDSSSSSSSSSSSNII and NNNN…TYNN. Cys439 carries the S-palmitoyl cysteine lipid modification. Cys441 is subject to Cysteine methyl ester. Cys441 carries S-geranylgeranyl cysteine lipidation. Residues 442–444 constitute a propeptide, removed in mature form; it reads NLM.

Belongs to the small GTPase superfamily. Rab family.

Its subcellular location is the cell membrane. This is Ras-related protein RabX (rabX) from Dictyostelium discoideum (Social amoeba).